The primary structure comprises 468 residues: Putative amidase AmiC (468 aa).

Active-site charge relay system residues include Lys-80 and Ser-155. Ser-179 serves as the catalytic Acyl-ester intermediate.

Belongs to the amidase family.

It carries out the reaction a monocarboxylic acid amide + H2O = a monocarboxylate + NH4(+). This is Putative amidase AmiC (amiC) from Mycobacterium leprae (strain TN).